A 360-amino-acid polypeptide reads, in one-letter code: Outer mitochondrial transmembrane helix translocase (360 aa).

At 1–15 (MVHGEAFSRPLSRNE) the chain is on the mitochondrial intermembrane side. The helical transmembrane segment at 16-34 (VVGLIFRLTIFGAVTYFTI) threads the bilayer. At 35 to 360 (KWMVDAIDPT…QNVLMHVSLD (326 aa)) the chain is on the cytoplasmic side. Residue 133 to 140 (GPPGCGKT) coordinates ATP.

The protein belongs to the AAA ATPase family. MSP1 subfamily.

Its subcellular location is the mitochondrion outer membrane. It localises to the peroxisome membrane. The protein localises to the postsynaptic cell membrane. The enzyme catalyses [protein]-with a C-terminal TM segment(out) + ATP + H2O = [protein]-with a C-terminal TM segment(in) + ADP + phosphate + H(+). Its function is as follows. Outer mitochondrial translocase required to remove mislocalized tail-anchored transmembrane proteins on mitochondria. Specifically recognizes and binds tail-anchored transmembrane proteins: acts as a dislocase that mediates the ATP-dependent extraction of mistargeted tail-anchored transmembrane proteins from the mitochondrion outer membrane. Also plays a critical role in regulating the surface expression of AMPA receptors (AMPAR), thereby regulating synaptic plasticity and learning and memory. The sequence is that of Outer mitochondrial transmembrane helix translocase from Xenopus tropicalis (Western clawed frog).